The chain runs to 159 residues: Phosphopantetheine adenylyltransferase (159 aa).

A substrate-binding site is contributed by Thr-10. ATP is bound by residues 10–11 and His-18; that span reads TF. Substrate-binding residues include Lys-42, Met-74, and Arg-88. ATP contacts are provided by residues 89–91, Glu-99, and 124–130; these read GLR and WSFISSS.

It belongs to the bacterial CoaD family. As to quaternary structure, homohexamer. It depends on Mg(2+) as a cofactor.

Its subcellular location is the cytoplasm. The catalysed reaction is (R)-4'-phosphopantetheine + ATP + H(+) = 3'-dephospho-CoA + diphosphate. It functions in the pathway cofactor biosynthesis; coenzyme A biosynthesis; CoA from (R)-pantothenate: step 4/5. Its function is as follows. Reversibly transfers an adenylyl group from ATP to 4'-phosphopantetheine, yielding dephospho-CoA (dPCoA) and pyrophosphate. The chain is Phosphopantetheine adenylyltransferase from Salmonella paratyphi A (strain ATCC 9150 / SARB42).